We begin with the raw amino-acid sequence, 102 residues long: NADH-quinone oxidoreductase subunit K (102 aa).

3 consecutive transmembrane segments (helical) span residues 5 to 25, 30 to 50, and 62 to 82; these read LTQYLLVAAILFTIGVAGIIL, IIIILMSVELILLSVNLNLVA, and IFALFILTVAAAEAAIGLAIL.

This sequence belongs to the complex I subunit 4L family. In terms of assembly, NDH-1 is composed of 14 different subunits. Subunits NuoA, H, J, K, L, M, N constitute the membrane sector of the complex.

It is found in the cell inner membrane. The enzyme catalyses a quinone + NADH + 5 H(+)(in) = a quinol + NAD(+) + 4 H(+)(out). Its function is as follows. NDH-1 shuttles electrons from NADH, via FMN and iron-sulfur (Fe-S) centers, to quinones in the respiratory chain. The immediate electron acceptor for the enzyme in this species is believed to be ubiquinone. Couples the redox reaction to proton translocation (for every two electrons transferred, four hydrogen ions are translocated across the cytoplasmic membrane), and thus conserves the redox energy in a proton gradient. The polypeptide is NADH-quinone oxidoreductase subunit K (Beijerinckia indica subsp. indica (strain ATCC 9039 / DSM 1715 / NCIMB 8712)).